We begin with the raw amino-acid sequence, 130 residues long: Small ribosomal subunit protein uS11 (130 aa).

Belongs to the universal ribosomal protein uS11 family. In terms of assembly, part of the 30S ribosomal subunit. Interacts with proteins S7 and S18. Binds to IF-3.

In terms of biological role, located on the platform of the 30S subunit, it bridges several disparate RNA helices of the 16S rRNA. Forms part of the Shine-Dalgarno cleft in the 70S ribosome. This chain is Small ribosomal subunit protein uS11, found in Rippkaea orientalis (strain PCC 8801 / RF-1) (Cyanothece sp. (strain PCC 8801)).